We begin with the raw amino-acid sequence, 282 residues long: Ribosomal RNA small subunit methyltransferase A (282 aa).

6 residues coordinate S-adenosyl-L-methionine: histidine 15, leucine 17, glycine 42, glutamate 64, aspartate 89, and asparagine 109.

It belongs to the class I-like SAM-binding methyltransferase superfamily. rRNA adenine N(6)-methyltransferase family. RsmA subfamily.

Its subcellular location is the cytoplasm. The catalysed reaction is adenosine(1518)/adenosine(1519) in 16S rRNA + 4 S-adenosyl-L-methionine = N(6)-dimethyladenosine(1518)/N(6)-dimethyladenosine(1519) in 16S rRNA + 4 S-adenosyl-L-homocysteine + 4 H(+). In terms of biological role, specifically dimethylates two adjacent adenosines (A1518 and A1519) in the loop of a conserved hairpin near the 3'-end of 16S rRNA in the 30S particle. May play a critical role in biogenesis of 30S subunits. The sequence is that of Ribosomal RNA small subunit methyltransferase A from Prochlorococcus marinus (strain MIT 9211).